The chain runs to 132 residues: UPF0060 membrane protein SG1469 (132 aa).

3 helical membrane-spanning segments follow: residues 5–25 (VLLY…PYCY), 32–52 (LLLI…VLYP), and 60–80 (AAYG…IDGI).

Belongs to the UPF0060 family.

It localises to the cell inner membrane. The chain is UPF0060 membrane protein SG1469 from Sodalis glossinidius (strain morsitans).